A 148-amino-acid polypeptide reads, in one-letter code: Helix-loop-helix protein 14 (148 aa).

Disordered regions lie at residues 1-21, 63-83, and 112-132; these read MAKK…HQVN, DPQQ…NSNN, and GDVS…SYSP. A basic motif region spans residues 4–17; the sequence is KNQVARNERERKRV. In terms of domain architecture, bHLH spans 4-56; it reads KNQVARNERERKRVHQVNHGFDVLRNRLQPKNHTKKWSKADTLREAVKYIQQL. Positions 18–56 are helix-loop-helix motif; the sequence is HQVNHGFDVLRNRLQPKNHTKKWSKADTLREAVKYIQQL. Residues 63 to 78 are compositionally biased toward polar residues; sequence DPQQPSVSSSTPDYTM. Low complexity predominate over residues 120 to 132; the sequence is SPTSSVSSSSYSP.

Its subcellular location is the nucleus. Its function is as follows. Probable transcription factor, involved in determining neuroblast cell fate, morphogenesis and aspects of terminal differentiation in both left/right symmetric and asymmetric neuronal lineages. This chain is Helix-loop-helix protein 14, found in Caenorhabditis elegans.